We begin with the raw amino-acid sequence, 156 residues long: Small ribosomal subunit protein uS7 (156 aa).

The protein belongs to the universal ribosomal protein uS7 family. As to quaternary structure, part of the 30S ribosomal subunit. Contacts proteins S9 and S11.

In terms of biological role, one of the primary rRNA binding proteins, it binds directly to 16S rRNA where it nucleates assembly of the head domain of the 30S subunit. Is located at the subunit interface close to the decoding center, probably blocks exit of the E-site tRNA. The polypeptide is Small ribosomal subunit protein uS7 (Ruegeria pomeroyi (strain ATCC 700808 / DSM 15171 / DSS-3) (Silicibacter pomeroyi)).